A 1343-amino-acid chain; its full sequence is DNA-directed RNA polymerase subunit beta (1343 aa).

The protein belongs to the RNA polymerase beta chain family. The RNAP catalytic core consists of 2 alpha, 1 beta, 1 beta' and 1 omega subunit. When a sigma factor is associated with the core the holoenzyme is formed, which can initiate transcription.

The enzyme catalyses RNA(n) + a ribonucleoside 5'-triphosphate = RNA(n+1) + diphosphate. Its function is as follows. DNA-dependent RNA polymerase catalyzes the transcription of DNA into RNA using the four ribonucleoside triphosphates as substrates. This is DNA-directed RNA polymerase subunit beta from Haemophilus influenzae (strain ATCC 51907 / DSM 11121 / KW20 / Rd).